Here is a 129-residue protein sequence, read N- to C-terminus: Ribosome-binding factor A (129 aa).

The protein belongs to the RbfA family. In terms of assembly, monomer. Binds 30S ribosomal subunits, but not 50S ribosomal subunits or 70S ribosomes.

It localises to the cytoplasm. Functionally, one of several proteins that assist in the late maturation steps of the functional core of the 30S ribosomal subunit. Associates with free 30S ribosomal subunits (but not with 30S subunits that are part of 70S ribosomes or polysomes). Required for efficient processing of 16S rRNA. May interact with the 5'-terminal helix region of 16S rRNA. In Marinomonas sp. (strain MWYL1), this protein is Ribosome-binding factor A.